The sequence spans 866 residues: Leucine--tRNA ligase (866 aa).

The 'HIGH' region motif lies at 42-52 (PYPSGKLHMGH). The 'KMSKS' region signature appears at 624 to 628 (TMSKS). Lys627 is an ATP binding site.

This sequence belongs to the class-I aminoacyl-tRNA synthetase family.

It is found in the cytoplasm. The catalysed reaction is tRNA(Leu) + L-leucine + ATP = L-leucyl-tRNA(Leu) + AMP + diphosphate. The polypeptide is Leucine--tRNA ligase (Nitrosospira multiformis (strain ATCC 25196 / NCIMB 11849 / C 71)).